A 227-amino-acid chain; its full sequence is Phosphoribosylformylglycinamidine synthase subunit PurQ (227 aa).

The region spanning 3 to 227 (FAVIVFPGSN…NWRESHVTAS (225 aa)) is the Glutamine amidotransferase type-1 domain. The active-site Nucleophile is the C86. Catalysis depends on residues H194 and E196.

As to quaternary structure, part of the FGAM synthase complex composed of 1 PurL, 1 PurQ and 2 PurS subunits.

The protein localises to the cytoplasm. The enzyme catalyses N(2)-formyl-N(1)-(5-phospho-beta-D-ribosyl)glycinamide + L-glutamine + ATP + H2O = 2-formamido-N(1)-(5-O-phospho-beta-D-ribosyl)acetamidine + L-glutamate + ADP + phosphate + H(+). It carries out the reaction L-glutamine + H2O = L-glutamate + NH4(+). Its pathway is purine metabolism; IMP biosynthesis via de novo pathway; 5-amino-1-(5-phospho-D-ribosyl)imidazole from N(2)-formyl-N(1)-(5-phospho-D-ribosyl)glycinamide: step 1/2. Functionally, part of the phosphoribosylformylglycinamidine synthase complex involved in the purines biosynthetic pathway. Catalyzes the ATP-dependent conversion of formylglycinamide ribonucleotide (FGAR) and glutamine to yield formylglycinamidine ribonucleotide (FGAM) and glutamate. The FGAM synthase complex is composed of three subunits. PurQ produces an ammonia molecule by converting glutamine to glutamate. PurL transfers the ammonia molecule to FGAR to form FGAM in an ATP-dependent manner. PurS interacts with PurQ and PurL and is thought to assist in the transfer of the ammonia molecule from PurQ to PurL. This chain is Phosphoribosylformylglycinamidine synthase subunit PurQ, found in Shouchella clausii (strain KSM-K16) (Alkalihalobacillus clausii).